Here is a 72-residue protein sequence, read N- to C-terminus: Tetrahydromethanopterin S-methyltransferase subunit G (72 aa).

Residues 48-68 form a helical membrane-spanning segment; sequence IGILYGGFIGLLLFLIYTVVS.

It belongs to the MtrG family. The complex is composed of 8 subunits; MtrA, MtrB, MtrC, MtrD, MtrE, MtrF, MtrG and MtrH.

The protein localises to the cell membrane. The catalysed reaction is 5-methyl-5,6,7,8-tetrahydromethanopterin + coenzyme M + 2 Na(+)(in) = 5,6,7,8-tetrahydromethanopterin + methyl-coenzyme M + 2 Na(+)(out). Its pathway is one-carbon metabolism; methanogenesis from CO(2); methyl-coenzyme M from 5,10-methylene-5,6,7,8-tetrahydromethanopterin: step 2/2. Functionally, part of a complex that catalyzes the formation of methyl-coenzyme M and tetrahydromethanopterin from coenzyme M and methyl-tetrahydromethanopterin. This is an energy-conserving, sodium-ion translocating step. The sequence is that of Tetrahydromethanopterin S-methyltransferase subunit G from Methanosarcina barkeri (strain Fusaro / DSM 804).